The sequence spans 252 residues: MNNFAKRIIPCLDVNNGRVVKGVNFVNLIDAGDPVEVAKIYNDSGADELCFLDITASFENRDTIVEVVRNVASELFIPLTVGGGIRKIDDISRLLEAGCDKVSINSAAIKNPNFIDEAAKKFGSQCIVVAIDAKKTDQGYHVFINGGRVDTKIDVFSWSKEVENRGCGEILLTSMDRDGTKSGFDNYLTGKVSKSLGIPVIASGGAGCMEHIRDTFLAGADAALAASIFHFGEIKIDDLKRYLRTQNIEVRL.

Residues aspartate 13 and aspartate 132 contribute to the active site.

It belongs to the HisA/HisF family. In terms of assembly, heterodimer of HisH and HisF.

It localises to the cytoplasm. It carries out the reaction 5-[(5-phospho-1-deoxy-D-ribulos-1-ylimino)methylamino]-1-(5-phospho-beta-D-ribosyl)imidazole-4-carboxamide + L-glutamine = D-erythro-1-(imidazol-4-yl)glycerol 3-phosphate + 5-amino-1-(5-phospho-beta-D-ribosyl)imidazole-4-carboxamide + L-glutamate + H(+). The protein operates within amino-acid biosynthesis; L-histidine biosynthesis; L-histidine from 5-phospho-alpha-D-ribose 1-diphosphate: step 5/9. Its function is as follows. IGPS catalyzes the conversion of PRFAR and glutamine to IGP, AICAR and glutamate. The HisF subunit catalyzes the cyclization activity that produces IGP and AICAR from PRFAR using the ammonia provided by the HisH subunit. This chain is Imidazole glycerol phosphate synthase subunit HisF, found in Campylobacter hominis (strain ATCC BAA-381 / DSM 21671 / CCUG 45161 / LMG 19568 / NCTC 13146 / CH001A).